The following is a 158-amino-acid chain: SsrA-binding protein (158 aa).

Residues 133–158 (KIHDKRETEAKRDWNRQKQRLLKDNA) form a disordered region. Residues 136–158 (DKRETEAKRDWNRQKQRLLKDNA) are compositionally biased toward basic and acidic residues.

The protein belongs to the SmpB family.

The protein localises to the cytoplasm. Its function is as follows. Required for rescue of stalled ribosomes mediated by trans-translation. Binds to transfer-messenger RNA (tmRNA), required for stable association of tmRNA with ribosomes. tmRNA and SmpB together mimic tRNA shape, replacing the anticodon stem-loop with SmpB. tmRNA is encoded by the ssrA gene; the 2 termini fold to resemble tRNA(Ala) and it encodes a 'tag peptide', a short internal open reading frame. During trans-translation Ala-aminoacylated tmRNA acts like a tRNA, entering the A-site of stalled ribosomes, displacing the stalled mRNA. The ribosome then switches to translate the ORF on the tmRNA; the nascent peptide is terminated with the 'tag peptide' encoded by the tmRNA and targeted for degradation. The ribosome is freed to recommence translation, which seems to be the essential function of trans-translation. This Ruegeria pomeroyi (strain ATCC 700808 / DSM 15171 / DSS-3) (Silicibacter pomeroyi) protein is SsrA-binding protein.